Reading from the N-terminus, the 272-residue chain is tRNA pseudouridine synthase A (272 aa).

Aspartate 52 serves as the catalytic Nucleophile. Tyrosine 110 is a binding site for substrate.

This sequence belongs to the tRNA pseudouridine synthase TruA family. As to quaternary structure, homodimer.

It catalyses the reaction uridine(38/39/40) in tRNA = pseudouridine(38/39/40) in tRNA. Its function is as follows. Formation of pseudouridine at positions 38, 39 and 40 in the anticodon stem and loop of transfer RNAs. The protein is tRNA pseudouridine synthase A of Cupriavidus necator (strain ATCC 17699 / DSM 428 / KCTC 22496 / NCIMB 10442 / H16 / Stanier 337) (Ralstonia eutropha).